Consider the following 147-residue polypeptide: Large ribosomal subunit protein uL16 (147 aa).

Belongs to the universal ribosomal protein uL16 family. Part of the 50S ribosomal subunit.

Its function is as follows. Binds 23S rRNA and is also seen to make contacts with the A and possibly P site tRNAs. The protein is Large ribosomal subunit protein uL16 of Caldicellulosiruptor saccharolyticus (strain ATCC 43494 / DSM 8903 / Tp8T 6331).